Here is a 438-residue protein sequence, read N- to C-terminus: Asparagine--tRNA ligase (438 aa).

This sequence belongs to the class-II aminoacyl-tRNA synthetase family. Homodimer.

The protein resides in the cytoplasm. The enzyme catalyses tRNA(Asn) + L-asparagine + ATP = L-asparaginyl-tRNA(Asn) + AMP + diphosphate + H(+). The protein is Asparagine--tRNA ligase of Thermus thermophilus (strain ATCC 27634 / DSM 579 / HB8).